The primary structure comprises 278 residues: HTH-type transcriptional regulator HdfR (278 aa).

The HTH lysR-type domain occupies 1 to 58 (MDTELLKTFLEVSRTRHFGRAAEALYLTQSAVSFRIRQLENQLGVNLFTRHRNNIRLT). Residues 18 to 37 (FGRAAEALYLTQSAVSFRIR) constitute a DNA-binding region (H-T-H motif).

Belongs to the LysR transcriptional regulatory family.

Functionally, negatively regulates the transcription of the flagellar master operon flhDC by binding to the upstream region of the operon. In Salmonella schwarzengrund (strain CVM19633), this protein is HTH-type transcriptional regulator HdfR.